The primary structure comprises 264 residues: MKQYLDLMKHILAEGVDKSDRTGTGTRSVFGYQMRFDLSKGFPLVSTKKCHMRSIIHELLWFLKGETNVAYLRENKVSIWDEWADDNGDLGPVYGAQWRSWPTQSGDAIDQISQVIAQIKSQPDSRRLIVSAWNVGELDKMALAPCHAFFQFYVADGKLSCQLYQRSCDVFLGLPFNIASYALLTMMVAQQCDLALGDFVWTGGDTHLYSNHMEQTALQLSREPMPLPTMTILRKPESIFDYQFDDFELTNYAPHPHIKAPVAV.

A dUMP-binding site is contributed by arginine 21. Residue histidine 51 coordinates (6R)-5,10-methylene-5,6,7,8-tetrahydrofolate. 126–127 (RR) lines the dUMP pocket. Cysteine 146 acts as the Nucleophile in catalysis. Residues 166-169 (RSCD), asparagine 177, and 207-209 (HLY) contribute to the dUMP site. Aspartate 169 contacts (6R)-5,10-methylene-5,6,7,8-tetrahydrofolate. Alanine 263 contacts (6R)-5,10-methylene-5,6,7,8-tetrahydrofolate.

This sequence belongs to the thymidylate synthase family. Bacterial-type ThyA subfamily. Homodimer.

The protein resides in the cytoplasm. The enzyme catalyses dUMP + (6R)-5,10-methylene-5,6,7,8-tetrahydrofolate = 7,8-dihydrofolate + dTMP. Its pathway is pyrimidine metabolism; dTTP biosynthesis. Functionally, catalyzes the reductive methylation of 2'-deoxyuridine-5'-monophosphate (dUMP) to 2'-deoxythymidine-5'-monophosphate (dTMP) while utilizing 5,10-methylenetetrahydrofolate (mTHF) as the methyl donor and reductant in the reaction, yielding dihydrofolate (DHF) as a by-product. This enzymatic reaction provides an intracellular de novo source of dTMP, an essential precursor for DNA biosynthesis. This chain is Thymidylate synthase, found in Shewanella baltica (strain OS223).